The chain runs to 348 residues: GTPase Obg (348 aa).

The region spanning 1–159 (MKFVDEVKVH…RELVLELKLM (159 aa)) is the Obg domain. Residues 160-331 (ADVGLVGLPN…LLSALVRILS (172 aa)) form the OBG-type G domain. GTP is bound by residues 166–173 (GLPNAGKS), 191–195 (FTTLI), 213–216 (DIPG), 283–286 (NKVD), and 312–314 (SAR). Mg(2+)-binding residues include Ser173 and Thr193.

Belongs to the TRAFAC class OBG-HflX-like GTPase superfamily. OBG GTPase family. In terms of assembly, monomer. It depends on Mg(2+) as a cofactor.

The protein resides in the cytoplasm. Its function is as follows. An essential GTPase which binds GTP, GDP and possibly (p)ppGpp with moderate affinity, with high nucleotide exchange rates and a fairly low GTP hydrolysis rate. Plays a role in control of the cell cycle, stress response, ribosome biogenesis and in those bacteria that undergo differentiation, in morphogenesis control. The protein is GTPase Obg of Syntrophobacter fumaroxidans (strain DSM 10017 / MPOB).